Here is a 320-residue protein sequence, read N- to C-terminus: Aspartate carbamoyltransferase catalytic subunit (320 aa).

Positions 65 and 66 each coordinate carbamoyl phosphate. L-aspartate is bound at residue Lys93. Positions 115, 143, and 146 each coordinate carbamoyl phosphate. Positions 176 and 230 each coordinate L-aspartate. 2 residues coordinate carbamoyl phosphate: Gly271 and Pro272.

The protein belongs to the aspartate/ornithine carbamoyltransferase superfamily. ATCase family. As to quaternary structure, heterododecamer (2C3:3R2) of six catalytic PyrB chains organized as two trimers (C3), and six regulatory PyrI chains organized as three dimers (R2).

It carries out the reaction carbamoyl phosphate + L-aspartate = N-carbamoyl-L-aspartate + phosphate + H(+). Its pathway is pyrimidine metabolism; UMP biosynthesis via de novo pathway; (S)-dihydroorotate from bicarbonate: step 2/3. In terms of biological role, catalyzes the condensation of carbamoyl phosphate and aspartate to form carbamoyl aspartate and inorganic phosphate, the committed step in the de novo pyrimidine nucleotide biosynthesis pathway. The polypeptide is Aspartate carbamoyltransferase catalytic subunit (Maricaulis maris (strain MCS10) (Caulobacter maris)).